Consider the following 198-residue polypeptide: Recombination protein RecR (198 aa).

Residues 57–72 form a C4-type zinc finger; that stretch reads CSVCGHITDQDPCYIC. The Toprim domain maps to 80–175; the sequence is SVICVVQDPK…KLSRIAHGLP (96 aa).

This sequence belongs to the RecR family.

May play a role in DNA repair. It seems to be involved in an RecBC-independent recombinational process of DNA repair. It may act with RecF and RecO. The polypeptide is Recombination protein RecR (Bacillus pumilus (strain SAFR-032)).